A 2245-amino-acid chain; its full sequence is Basic helix-loop-helix domain-containing protein USF3 (2245 aa).

Residues 1 to 28 (MPEMTENETPTKKQHRKKNRETHNAVER) are disordered. The region spanning 18–69 (KNRETHNAVERHRKKKINAGINRIGELIPCSPALKQSKNMILDQAFKYITEL) is the bHLH domain. Residues 77-112 (LLNGGNNEQAEEIKKLRKQLEEIQKENGRYIELLKA) adopt a coiled-coil conformation. Disordered regions lie at residues 271-290 (LHTCLNDQNSSENKNGQENP), 447-470 (SQTPSSAVTPVLNESGTSPTTSNH), 881-900 (SKSKSAEKSSPPSQESVTSE), 906-933 (AAKSKDSTPNLQQETSQDKPPSSLALSD), 1015-1041 (KNPQKSSLSDQMDHPDFSSENPKIVDS), 1164-1238 (PSEA…SITS), 1307-1331 (IPNSQIQEPLLKPSHESRKDSAKRA), 1460-1624 (IKQQ…VSGH), 1636-1664 (LEQQMVSQPSIVTRSSDMTCTPHRPERNR), 1736-1764 (TFKPSGASQQPQSNFEVQSSRNNEIGNPV), 1777-1815 (ISQNTGPPPIDRQKRLSYPPVQSIPTGNGIPSRDSENTC), 1834-1859 (GSQRSLSEHQRNTQCGPSSAIEYNCP), and 1891-2031 (STLN…QPAT). The span at 273 to 288 (TCLNDQNSSENKNGQE) shows a compositional bias: polar residues. Residues 881 to 896 (SKSKSAEKSSPPSQES) are compositionally biased toward low complexity. The span at 912–925 (STPNLQQETSQDKP) shows a compositional bias: polar residues. 2 stretches are compositionally biased toward polar residues: residues 1185–1202 (GTGQAEATPNEFNSQGSI) and 1219–1238 (IKTSNASLQDSTSQPPSITS). Positions 1319-1331 (PSHESRKDSAKRA) are enriched in basic and acidic residues. Low complexity predominate over residues 1462–1478 (QQQQQQQQQQQQQQQQQ). Polar residues-rich tracts occupy residues 1501–1520 (SVHSQPHNVHQQRTLQQEVQ) and 1528–1538 (VQGTQTSQLSL). Low complexity predominate over residues 1560–1569 (QQMQQQMQQH). Positions 1570 to 1585 (FGSSQTEKSCENPSTS) are enriched in polar residues. A compositionally biased stretch (low complexity) spans 1593 to 1624 (QNHLNQDIMHQQQDVGSRQQGSGVSSEHVSGH). Polar residues predominate over residues 1636–1654 (LEQQMVSQPSIVTRSSDMT). Polar residues-rich tracts occupy residues 1904–1923 (GDIQGRNTSPNVSVQKSNPM) and 1998–2007 (SGNQRQSTVF).

It localises to the nucleus. Involved in the negative regulation of epithelial-mesenchymal transition, the process by which epithelial cells lose their polarity and adhesion properties to become mesenchymal cells with enhanced migration and invasive properties. The polypeptide is Basic helix-loop-helix domain-containing protein USF3 (Homo sapiens (Human)).